Consider the following 317-residue polypeptide: Melanocyte-stimulating hormone receptor (317 aa).

At methionine 1–glutamate 37 the chain is on the extracellular side. N-linked (GlcNAc...) asparagine glycans are attached at residues asparagine 15 and asparagine 29. The helical transmembrane segment at valine 38–isoleucine 63 threads the bilayer. Over alanine 64–proline 72 the chain is Cytoplasmic. Residues methionine 73–leucine 93 form a helical membrane-spanning segment. At glutamate 94–aspartate 118 the chain is on the extracellular side. A helical membrane pass occupies residues valine 119–valine 140. Topologically, residues aspartate 141 to arginine 163 are cytoplasmic. A helical membrane pass occupies residues alanine 164–tyrosine 183. Residues aspartate 184–cysteine 191 are Extracellular-facing. The helical transmembrane segment at leucine 192–leucine 211 threads the bilayer. Residues alanine 212–alanine 240 lie on the Cytoplasmic side of the membrane. The helical transmembrane segment at alanine 241 to leucine 266 threads the bilayer. The Extracellular segment spans residues cysteine 267–asparagine 279. A helical membrane pass occupies residues phenylalanine 280–phenylalanine 300. The Cytoplasmic segment spans residues arginine 301 to tryptophan 317. Cysteine 315 carries the S-palmitoyl cysteine lipid modification.

It belongs to the G-protein coupled receptor 1 family. Interacts with MGRN1, but does not undergo MGRN1-mediated ubiquitination; this interaction competes with GNAS-binding and thus inhibits agonist-induced cAMP production. Interacts with OPN3; the interaction results in a decrease in MC1R-mediated cAMP signaling and ultimately a decrease in melanin production in melanocytes.

Its subcellular location is the cell membrane. Its function is as follows. Receptor for MSH (alpha, beta and gamma) and ACTH. The activity of this receptor is mediated by G proteins which activate adenylate cyclase. Mediates melanogenesis, the production of eumelanin (black/brown) and phaeomelanin (red/yellow), via regulation of cAMP signaling in melanocytes. This is Melanocyte-stimulating hormone receptor (MC1R) from Panthera onca (Jaguar).